The primary structure comprises 390 residues: Succinate--CoA ligase [ADP-forming] subunit beta (390 aa).

The ATP-grasp domain occupies 9–245; the sequence is KHLLKKYNIP…TTQEDEHETM (237 aa). Residues K46, 53–55, E99, S102, and E107 contribute to the ATP site; that span reads GRG. Mg(2+)-binding residues include N200 and D214. Substrate is bound by residues N265 and 322-324; that span reads GIV.

The protein belongs to the succinate/malate CoA ligase beta subunit family. Heterotetramer of two alpha and two beta subunits. Mg(2+) serves as cofactor.

It carries out the reaction succinate + ATP + CoA = succinyl-CoA + ADP + phosphate. The catalysed reaction is GTP + succinate + CoA = succinyl-CoA + GDP + phosphate. It functions in the pathway carbohydrate metabolism; tricarboxylic acid cycle; succinate from succinyl-CoA (ligase route): step 1/1. Its function is as follows. Succinyl-CoA synthetase functions in the citric acid cycle (TCA), coupling the hydrolysis of succinyl-CoA to the synthesis of either ATP or GTP and thus represents the only step of substrate-level phosphorylation in the TCA. The beta subunit provides nucleotide specificity of the enzyme and binds the substrate succinate, while the binding sites for coenzyme A and phosphate are found in the alpha subunit. The protein is Succinate--CoA ligase [ADP-forming] subunit beta of Coxiella burnetii (strain RSA 331 / Henzerling II).